A 217-amino-acid polypeptide reads, in one-letter code: Deoxyribose-phosphate aldolase 1 (217 aa).

Asp-89 acts as the Proton donor/acceptor in catalysis. Lys-151 functions as the Schiff-base intermediate with acetaldehyde in the catalytic mechanism. Lys-180 serves as the catalytic Proton donor/acceptor.

The protein belongs to the DeoC/FbaB aldolase family. DeoC type 1 subfamily.

The protein resides in the cytoplasm. It carries out the reaction 2-deoxy-D-ribose 5-phosphate = D-glyceraldehyde 3-phosphate + acetaldehyde. The protein operates within carbohydrate degradation; 2-deoxy-D-ribose 1-phosphate degradation; D-glyceraldehyde 3-phosphate and acetaldehyde from 2-deoxy-alpha-D-ribose 1-phosphate: step 2/2. Its function is as follows. Catalyzes a reversible aldol reaction between acetaldehyde and D-glyceraldehyde 3-phosphate to generate 2-deoxy-D-ribose 5-phosphate. This chain is Deoxyribose-phosphate aldolase 1, found in Cutibacterium acnes (strain DSM 16379 / KPA171202) (Propionibacterium acnes).